Reading from the N-terminus, the 124-residue chain is Acidic phospholipase A2 BA2 (124 aa).

7 cysteine pairs are disulfide-bonded: Cys-26–Cys-116, Cys-28–Cys-44, Cys-43–Cys-95, Cys-49–Cys-124, Cys-50–Cys-88, Cys-57–Cys-81, and Cys-75–Cys-86. Positions 27, 29, and 31 each coordinate Ca(2+). Residue His-47 is part of the active site. Residue Asp-48 participates in Ca(2+) binding. Asp-89 is a catalytic residue.

It belongs to the phospholipase A2 family. Group II subfamily. D49 sub-subfamily. Ca(2+) is required as a cofactor. In terms of tissue distribution, expressed by the venom gland.

It localises to the secreted. The catalysed reaction is a 1,2-diacyl-sn-glycero-3-phosphocholine + H2O = a 1-acyl-sn-glycero-3-phosphocholine + a fatty acid + H(+). Its function is as follows. PLA2 catalyzes the calcium-dependent hydrolysis of the 2-acyl groups in 3-sn-phosphoglycerides. The polypeptide is Acidic phospholipase A2 BA2 (Gloydius halys (Chinese water mocassin)).